The following is a 386-amino-acid chain: Na(+)/H(+) antiporter NhaA (386 aa).

Helical transmembrane passes span 10–30 (MGSA…IFAN), 58–78 (LLHW…GLEV), 94–114 (IFPA…YYLI), 124–144 (GWAI…ALLG), 154–174 (FLLA…AVFF), 176–196 (EELS…LITL), 199–219 (MKVG…AAVL), 253–273 (ILTP…NAGV), 283–303 (IFST…PLGV), 327–347 (VFAI…LAGL), and 361–381 (LSRL…YLLL).

It belongs to the NhaA Na(+)/H(+) (TC 2.A.33) antiporter family.

The protein resides in the cell inner membrane. It catalyses the reaction Na(+)(in) + 2 H(+)(out) = Na(+)(out) + 2 H(+)(in). In terms of biological role, na(+)/H(+) antiporter that extrudes sodium in exchange for external protons. In Mannheimia succiniciproducens (strain KCTC 0769BP / MBEL55E), this protein is Na(+)/H(+) antiporter NhaA.